A 660-amino-acid chain; its full sequence is MLCKRTLSEISSLYTASKKKKTVIDTLSYTYPDVLLSCNERYQITHPELGIVHASNLYCSSLESFCLQYRDYGNDLSIRSCEKLVFSDALITGLSRIKFTPWPECRTRYETTVSELRRLHDMDNFTEASGFLEDLKRWLCSQNVFLEPFQKNCILHVICFLVATRTPHHYHYIFEYIKRLFNIENINTSVLDTFKHKTTVFLVPRRHGKTWILTPIITFLIKNFSNISVGYVAHQKHVSQHVMKEVEILCRREIPYVVENKDNVISVIRTNSRSCALFASCFNTNSIRGQSFNILLVDESNFIKKEALHAIIGFLAQSTAKIIFISSCNTSTQSTSFLAHVKKTPTQILNVISYVCEEHLYSFGERSEAITCPCYRLHKPTFISLNLNIKKTANAFLKDSFNEEILGTTNTSFLANPILTDSSVNEFDMIRYSTVNKQLQEHLADTLFVYVDPAFTTNRRASGTGVAGVGRYNNQFIVYGIEHFYLKSLADTSEDSIGECVAFMISGIIKIHPFFTMVRVLIEGNSSQAASVKIAYCIKAHLSDSACILQFYQTLDQNGFEQPFFLLKKNKRAAVEHFVSKFNSNLIKASQEIISHTIKLNFDPIEYLLLQIKNISQIVTTESVEYTTRKTKDSSDDALVAVIMAIYFCNDQEVALYKCI.

Positions 203-210 match the Walker A motif motif; sequence VPRRHGKT. Residues 294–299 carry the Walker B motif motif; that stretch reads ILLVDE. Residue Glu-299 is the For ATPase activity of the active site. Active-site for nuclease activity residues include Asp-452, Glu-523, and Asp-637.

Belongs to the herpesviridae TRM3 protein family. Interacts with the terminase subunits TRM1 and TRM2. Interacts with portal protein.

The protein resides in the host nucleus. Its function is as follows. Component of the molecular motor that translocates viral genomic DNA in empty capsid during DNA packaging. Forms a tripartite terminase complex together with TRM1 and TRM2 in the host cytoplasm. Once the complex reaches the host nucleus, it interacts with the capsid portal vertex. This portal forms a ring in which genomic DNA is translocated into the capsid. TRM3 carries an RNase H-like nuclease activity that plays an important role for the cleavage of concatemeric viral DNA into unit length genomes. The polypeptide is Tripartite terminase subunit 3 (Elephas maximus (Indian elephant)).